We begin with the raw amino-acid sequence, 262 residues long: Phosphatidylserine decarboxylase proenzyme (262 aa).

Catalysis depends on charge relay system; for autoendoproteolytic cleavage activity residues D86, H142, and S226. The Schiff-base intermediate with substrate; via pyruvic acid; for decarboxylase activity role is filled by S226. The residue at position 226 (S226) is a Pyruvic acid (Ser); by autocatalysis.

It belongs to the phosphatidylserine decarboxylase family. PSD-B subfamily. Prokaryotic type I sub-subfamily. Heterodimer of a large membrane-associated beta subunit and a small pyruvoyl-containing alpha subunit. It depends on pyruvate as a cofactor. In terms of processing, is synthesized initially as an inactive proenzyme. Formation of the active enzyme involves a self-maturation process in which the active site pyruvoyl group is generated from an internal serine residue via an autocatalytic post-translational modification. Two non-identical subunits are generated from the proenzyme in this reaction, and the pyruvate is formed at the N-terminus of the alpha chain, which is derived from the carboxyl end of the proenzyme. The autoendoproteolytic cleavage occurs by a canonical serine protease mechanism, in which the side chain hydroxyl group of the serine supplies its oxygen atom to form the C-terminus of the beta chain, while the remainder of the serine residue undergoes an oxidative deamination to produce ammonia and the pyruvoyl prosthetic group on the alpha chain. During this reaction, the Ser that is part of the protease active site of the proenzyme becomes the pyruvoyl prosthetic group, which constitutes an essential element of the active site of the mature decarboxylase.

Its subcellular location is the cell membrane. The catalysed reaction is a 1,2-diacyl-sn-glycero-3-phospho-L-serine + H(+) = a 1,2-diacyl-sn-glycero-3-phosphoethanolamine + CO2. It functions in the pathway phospholipid metabolism; phosphatidylethanolamine biosynthesis; phosphatidylethanolamine from CDP-diacylglycerol: step 2/2. Functionally, catalyzes the formation of phosphatidylethanolamine (PtdEtn) from phosphatidylserine (PtdSer). This is Phosphatidylserine decarboxylase proenzyme from Bacillus cereus (strain B4264).